The sequence spans 977 residues: Alanine--tRNA ligase (977 aa).

The segment at 512–535 (SQVDSKLQSSTPAGTGSYDSKQVS) is disordered. The Zn(2+) site is built by His618, His622, Cys720, and His724.

This sequence belongs to the class-II aminoacyl-tRNA synthetase family. It depends on Zn(2+) as a cofactor.

It is found in the cytoplasm. The enzyme catalyses tRNA(Ala) + L-alanine + ATP = L-alanyl-tRNA(Ala) + AMP + diphosphate. In terms of biological role, catalyzes the attachment of alanine to tRNA(Ala) in a two-step reaction: alanine is first activated by ATP to form Ala-AMP and then transferred to the acceptor end of tRNA(Ala). Also edits incorrectly charged Ser-tRNA(Ala) and Gly-tRNA(Ala) via its editing domain. The sequence is that of Alanine--tRNA ligase from Leptospira interrogans serogroup Icterohaemorrhagiae serovar copenhageni (strain Fiocruz L1-130).